A 604-amino-acid polypeptide reads, in one-letter code: Netrin-1 (604 aa).

An N-terminal signal peptide occupies residues 1–24 (MMRAVWEALAALAAVACLVGAVRG). Positions 47 to 284 (HPRRCIPDFV…AVSDLQVGGR (238 aa)) constitute a Laminin N-terminal domain. N-linked (GlcNAc...) asparagine glycans are attached at residues N95, N116, and N131. Intrachain disulfides connect C119–C152, C285–C294, C287–C304, C306–C315, C318–C338, C341–C350, C343–C368, C371–C380, C383–C401, C404–C416, C406–C423, C425–C434, C437–C451, C472–C544, and C491–C601. Laminin EGF-like domains lie at 285-340 (CKCN…ECVA), 341-403 (CNCN…ACKA), and 404-453 (CDCH…PCIK). A glycan (N-linked (GlcNAc...) asparagine) is linked at N417. Residues 472–601 (CDSYCKASKG…FQQREKKGKC (130 aa)) form the NTR domain. Residues 530-532 (RGD) carry the Cell attachment site motif.

In terms of assembly, binds to its receptors; DCC, UNC5A, UNC5B, UNC5C and probably UNC5D. Binds to its receptor; DSCAM. Interacts with DCC. Interacts with APP. Widely expressed in normal adult tissues with highest levels in heart, small intestine, colon, liver and prostate. Reduced expression in brain tumors and neuroblastomas. Expressed in epididymis (at protein level).

The protein localises to the secreted. It is found in the cytoplasm. Netrins control guidance of CNS commissural axons and peripheral motor axons. Its association with either DCC or some UNC5 receptors will lead to axon attraction or repulsion, respectively. Binding to UNC5C might cause dissociation of UNC5C from polymerized TUBB3 in microtubules and thereby lead to increased microtubule dynamics and axon repulsion. Involved in dorsal root ganglion axon projection towards the spinal cord. It also serves as a survival factor via its association with its receptors which prevent the initiation of apoptosis. Involved in tumorigenesis by regulating apoptosis. In Homo sapiens (Human), this protein is Netrin-1 (NTN1).